The sequence spans 325 residues: uncharacterized protein (325 aa).

This sequence belongs to the mgp1/MG371 family.

This is an uncharacterized protein from Mycoplasma pneumoniae (strain ATCC 29342 / M129 / Subtype 1) (Mycoplasmoides pneumoniae).